The sequence spans 102 residues: Urease subunit beta (102 aa).

This sequence belongs to the urease beta subunit family. In terms of assembly, heterotrimer of UreA (gamma), UreB (beta) and UreC (alpha) subunits. Three heterotrimers associate to form the active enzyme.

It localises to the cytoplasm. The catalysed reaction is urea + 2 H2O + H(+) = hydrogencarbonate + 2 NH4(+). It functions in the pathway nitrogen metabolism; urea degradation; CO(2) and NH(3) from urea (urease route): step 1/1. This is Urease subunit beta from Alteromonas mediterranea (strain DSM 17117 / CIP 110805 / LMG 28347 / Deep ecotype).